Reading from the N-terminus, the 564-residue chain is Carbamoyl phosphate synthase large chain, N-terminal section (564 aa).

The tract at residues 1 to 399 is carboxyphosphate synthetic domain; sequence MPETPNKVLI…ALQKAIRSLE (399 aa). Residues Arg-127, Arg-167, Gly-173, Gly-174, Glu-206, Val-208, Glu-213, Gly-239, Val-240, His-241, Gln-282, and Glu-296 each coordinate ATP. In terms of domain architecture, ATP-grasp spans 131-325; it reads RAFMKKIGEP…IARIAAKIAI (195 aa). Residues Gln-282, Glu-296, and Asn-298 each coordinate Mg(2+). Mn(2+)-binding residues include Gln-282, Glu-296, and Asn-298. The interval 400–560 is oligomerization domain; sequence IGEPGLGPSP…YSTYEEECEA (161 aa).

This sequence belongs to the CarB family. As to quaternary structure, composed of two chains; the small (or glutamine) chain promotes the hydrolysis of glutamine to ammonia, which is used by the large (or ammonia) chain to synthesize carbamoyl phosphate. Tetramer of heterodimers (alpha,beta)4. The cofactor is Mg(2+). Mn(2+) is required as a cofactor.

It carries out the reaction hydrogencarbonate + L-glutamine + 2 ATP + H2O = carbamoyl phosphate + L-glutamate + 2 ADP + phosphate + 2 H(+). The catalysed reaction is hydrogencarbonate + NH4(+) + 2 ATP = carbamoyl phosphate + 2 ADP + phosphate + 2 H(+). Its pathway is amino-acid biosynthesis; L-arginine biosynthesis; carbamoyl phosphate from bicarbonate: step 1/1. It participates in pyrimidine metabolism; UMP biosynthesis via de novo pathway; (S)-dihydroorotate from bicarbonate: step 1/3. Its function is as follows. Large subunit of the glutamine-dependent carbamoyl phosphate synthetase (CPSase). CPSase catalyzes the formation of carbamoyl phosphate from the ammonia moiety of glutamine, carbonate, and phosphate donated by ATP, constituting the first step of 2 biosynthetic pathways, one leading to arginine and/or urea and the other to pyrimidine nucleotides. The large subunit (synthetase) binds the substrates ammonia (free or transferred from glutamine from the small subunit), hydrogencarbonate and ATP and carries out an ATP-coupled ligase reaction, activating hydrogencarbonate by forming carboxy phosphate which reacts with ammonia to form carbamoyl phosphate. In Methanopyrus kandleri (strain AV19 / DSM 6324 / JCM 9639 / NBRC 100938), this protein is Carbamoyl phosphate synthase large chain, N-terminal section (carB1).